The primary structure comprises 515 residues: Bifunctional purine biosynthesis protein PurH (515 aa).

Residues 1–145 (MTKRALISVS…KNHASVTVVV (145 aa)) enclose the MGS-like domain.

This sequence belongs to the PurH family.

It carries out the reaction (6R)-10-formyltetrahydrofolate + 5-amino-1-(5-phospho-beta-D-ribosyl)imidazole-4-carboxamide = 5-formamido-1-(5-phospho-D-ribosyl)imidazole-4-carboxamide + (6S)-5,6,7,8-tetrahydrofolate. It catalyses the reaction IMP + H2O = 5-formamido-1-(5-phospho-D-ribosyl)imidazole-4-carboxamide. It functions in the pathway purine metabolism; IMP biosynthesis via de novo pathway; 5-formamido-1-(5-phospho-D-ribosyl)imidazole-4-carboxamide from 5-amino-1-(5-phospho-D-ribosyl)imidazole-4-carboxamide (10-formyl THF route): step 1/1. The protein operates within purine metabolism; IMP biosynthesis via de novo pathway; IMP from 5-formamido-1-(5-phospho-D-ribosyl)imidazole-4-carboxamide: step 1/1. This Streptococcus pyogenes serotype M3 (strain ATCC BAA-595 / MGAS315) protein is Bifunctional purine biosynthesis protein PurH.